The sequence spans 530 residues: Probable 1,4-beta-D-glucan cellobiohydrolase B (530 aa).

A signal peptide spans M1–A26. The segment at Q27–S461 is catalytic. E238 (nucleophile) is an active-site residue. The Proton donor role is filled by E243. Residue N296 is glycosylated (N-linked (GlcNAc...) asparagine). A disordered region spans residues T462 to G492. Residues T462–G494 form a ser/Thr-rich linker region. Low complexity predominate over residues T475 to G488. A CBM1 domain is found at G494 to L530. 2 cysteine pairs are disulfide-bonded: C502–C519 and C513–C529.

It belongs to the glycosyl hydrolase 7 (cellulase C) family.

Its subcellular location is the secreted. The enzyme catalyses Hydrolysis of (1-&gt;4)-beta-D-glucosidic linkages in cellulose and cellotetraose, releasing cellobiose from the non-reducing ends of the chains.. The biological conversion of cellulose to glucose generally requires three types of hydrolytic enzymes: (1) Endoglucanases which cut internal beta-1,4-glucosidic bonds; (2) Exocellobiohydrolases that cut the disaccharide cellobiose from the non-reducing end of the cellulose polymer chain; (3) Beta-1,4-glucosidases which hydrolyze the cellobiose and other short cello-oligosaccharides to glucose. The chain is Probable 1,4-beta-D-glucan cellobiohydrolase B (cbhB) from Neosartorya fischeri (strain ATCC 1020 / DSM 3700 / CBS 544.65 / FGSC A1164 / JCM 1740 / NRRL 181 / WB 181) (Aspergillus fischerianus).